We begin with the raw amino-acid sequence, 258 residues long: Imidazole glycerol phosphate synthase subunit HisF (258 aa).

Residues Asp11 and Asp130 contribute to the active site.

The protein belongs to the HisA/HisF family. Heterodimer of HisH and HisF.

It localises to the cytoplasm. It catalyses the reaction 5-[(5-phospho-1-deoxy-D-ribulos-1-ylimino)methylamino]-1-(5-phospho-beta-D-ribosyl)imidazole-4-carboxamide + L-glutamine = D-erythro-1-(imidazol-4-yl)glycerol 3-phosphate + 5-amino-1-(5-phospho-beta-D-ribosyl)imidazole-4-carboxamide + L-glutamate + H(+). Its pathway is amino-acid biosynthesis; L-histidine biosynthesis; L-histidine from 5-phospho-alpha-D-ribose 1-diphosphate: step 5/9. Functionally, IGPS catalyzes the conversion of PRFAR and glutamine to IGP, AICAR and glutamate. The HisF subunit catalyzes the cyclization activity that produces IGP and AICAR from PRFAR using the ammonia provided by the HisH subunit. This is Imidazole glycerol phosphate synthase subunit HisF from Xanthomonas oryzae pv. oryzae (strain MAFF 311018).